A 307-amino-acid chain; its full sequence is Olfactory receptor 8K5 (307 aa).

Residues 1–25 lie on the Extracellular side of the membrane; sequence MGQHNLTVLTEFILMELTRRPELQI. N-linked (GlcNAc...) asparagine glycosylation is present at Asn5. Residues 26-46 form a helical membrane-spanning segment; it reads PLFGVFLVIYLITVVGNLTMI. Residues 47-54 lie on the Cytoplasmic side of the membrane; sequence ILTKLDSH. Residues 55–75 traverse the membrane as a helical segment; sequence LHTPMYFSIRHLAFVDLGNST. The Extracellular portion of the chain corresponds to 76–99; that stretch reads VICPKVLANFVVDRNTISYYACAA. Cys97 and Cys189 are oxidised to a cystine. Residues 100-120 traverse the membrane as a helical segment; sequence QLAFFLMFIISEFFILSAMAY. Topologically, residues 121 to 139 are cytoplasmic; that stretch reads DRYVAICNPLLYYVIMSQR. A helical membrane pass occupies residues 140 to 160; that stretch reads LCHVLVGIQYLYSTFQALMFT. At 161–197 the chain is on the extracellular side; it reads IKIFTLTFCGSNVISHFYCDDVPLLPMLCSNAQEIEL. The helical transmembrane segment at 198-217 threads the bilayer; the sequence is LSILFSVFNLISSFLIVLVS. At 218–237 the chain is on the cytoplasmic side; it reads YMLILLAICQMHSAEGRKKA. Residues 238–258 traverse the membrane as a helical segment; it reads FSTCGSHLTVVVVFYGSLLFM. Residues 259-271 lie on the Extracellular side of the membrane; it reads YMQPNSTHFFDTD. Asn263 carries an N-linked (GlcNAc...) asparagine glycan. The chain crosses the membrane as a helical span at residues 272–292; that stretch reads KMASVFYTLVIPMLNPLIYSL. The Cytoplasmic segment spans residues 293-307; sequence RNEEVKNAFYKLFEN.

The protein belongs to the G-protein coupled receptor 1 family.

It localises to the cell membrane. Odorant receptor. The polypeptide is Olfactory receptor 8K5 (OR8K5) (Homo sapiens (Human)).